We begin with the raw amino-acid sequence, 911 residues long: Probable dipeptidyl-aminopeptidase B (911 aa).

A disordered region spans residues 1-39; the sequence is MPRPRAAKEEETELLAQHQESPRPSSDGSEASASSISTT. Topologically, residues 1-97 are cytoplasmic; that stretch reads MPRPRAAKEE…TPVDKKARRT (97 aa). The span at 25 to 39 shows a compositional bias: low complexity; it reads SSDGSEASASSISTT. A helical; Signal-anchor for type II membrane protein transmembrane segment spans residues 98 to 118; the sequence is LWIVGTICAVGWALALVSFLM. Topologically, residues 119–911 are vacuolar; the sequence is NGNYKHSSTR…AQADARSLGR (793 aa). 2 N-linked (GlcNAc...) asparagine glycosylation sites follow: Asn268 and Asn564. Ser755 serves as the catalytic Charge relay system. Asn809 is a glycosylation site (N-linked (GlcNAc...) asparagine). Residues Asp832 and His865 each act as charge relay system in the active site.

This sequence belongs to the peptidase S9B family.

The protein localises to the vacuole membrane. The catalysed reaction is Release of an N-terminal dipeptide, Xaa-Yaa-|-Zaa-, from a polypeptide, preferentially when Yaa is Pro, provided Zaa is neither Pro nor hydroxyproline.. Its function is as follows. Type IV dipeptidyl-peptidase which removes N-terminal dipeptides sequentially from polypeptides having unsubstituted N-termini provided that the penultimate residue is proline. The sequence is that of Probable dipeptidyl-aminopeptidase B (DAPB) from Phaeosphaeria nodorum (strain SN15 / ATCC MYA-4574 / FGSC 10173) (Glume blotch fungus).